We begin with the raw amino-acid sequence, 864 residues long: Disintegrin and metalloproteinase domain-containing protein 15 (864 aa).

Residues 1–17 (MRLALLWALGLLGAGSP) form the signal peptide. Residues 17–49 (PRPSPPLPNIGGTEEEQQASPERTQSRSLENQV) form a disordered region. The propeptide occupies 18–208 (RPSPPLPNIG…EQHHLRRLKR (191 aa)). The span at 34-49 (QASPERTQSRSLENQV) shows a compositional bias: polar residues. N-linked (GlcNAc...) asparagine glycosylation is present at Asn57. The Cysteine switch motif lies at 178–185 (HTCAPSWH). Cys180 provides a ligand contact to Zn(2+). Residues 209-698 (DVVTETKIVE…QLRATSSLTT (490 aa)) are Extracellular-facing. A Peptidase M12B domain is found at 215 to 416 (KIVELVIVAD…GMGSCLFEWP (202 aa)). Asn239 is a glycosylation site (N-linked (GlcNAc...) asparagine). Disulfide bonds link Cys325–Cys411, Cys367–Cys395, Cys369–Cys378, and Cys482–Cys502. Residue His350 participates in Zn(2+) binding. Glu351 is an active-site residue. 2 residues coordinate Zn(2+): His354 and His360. 2 N-linked (GlcNAc...) asparagine glycosylation sites follow: Asn391 and Asn394. One can recognise a Disintegrin domain in the interval 423–510 (SSLCGNMFVD…QCPPDIRLGD (88 aa)). N-linked (GlcNAc...) asparagine glycans are attached at residues Asn608 and Asn613. 3 cysteine pairs are disulfide-bonded: Cys659-Cys669, Cys663-Cys675, and Cys677-Cys686. In terms of domain architecture, EGF-like spans 659-687 (CRSKCHGHGVCDSSRHCHCDEGWAPPDCM). The helical transmembrane segment at 699 to 719 (GLLLSLLLLLVLVLLGASYWY) threads the bilayer. A phosphotyrosine; by HCK and LCK mark is found at Tyr717 and Tyr737. The Cytoplasmic portion of the chain corresponds to 720–864 (RARLHQRLCQ…PPPAASSLYL (145 aa)). Positions 738–864 (RAAQSGPPER…PPPAASSLYL (127 aa)) are disordered. The span at 753-765 (RAQQMPGTKQANV) shows a compositional bias: polar residues. 2 stretches are compositionally biased toward pro residues: residues 768 to 780 (PVPP…PNPV) and 810 to 825 (PQGP…PLPA). An SH3-binding motif is present at residues 816–822 (PPPPRKP). Positions 826 to 850 (NPQGRPPLGDLPGPGDGSLQLVVPS) are enriched in low complexity. Positions 851 to 857 (RPAPPPP) match the SH3-binding motif.

Interacts with ITAGV-ITGB3 (vitronectin receptor). Interacts with SH3GL2 and SNX9; this interaction occurs preferentially with ADAM15 precursor, rather than the processed form, suggesting it occurs in a secretory pathway compartment prior to the medial Golgi. Interacts with ITAG9-ITGB1. Interacts specifically with Src family protein-tyrosine kinases (PTKs). Interacts with SH3PXD2A. Interacts with ITAGV-ITGB1. Interacts with GRB2, HCK, ITSN1, ITSN2, LYN, MAPK1, MAPK3, NCF1, NCK1, nephrocystin, PTK6, SNX33, LCK and SRC. Zn(2+) serves as cofactor. The precursor is cleaved by a furin endopeptidase. Post-translationally, phosphorylation increases association with PTKs. As to expression, predominantly expressed in brain, spinal cord, sciatic nerve and lung. Expressed at lower levels in all other tissues. In the peripheral nervous system, expressed predominantly by Schwann cells. In the central nervous system, preferentially expressed by neuronal cells.

The protein resides in the endomembrane system. It is found in the cell junction. The protein localises to the adherens junction. It localises to the cell projection. Its subcellular location is the cilium. The protein resides in the flagellum. It is found in the cytoplasmic vesicle. The protein localises to the secretory vesicle. It localises to the acrosome. Functionally, active metalloproteinase with gelatinolytic and collagenolytic activity. Plays a role in the wound healing process. Mediates both heterotypic intraepithelial cell/T-cell interactions and homotypic T-cell aggregation. Inhibits beta-1 integrin-mediated cell adhesion and migration of airway smooth muscle cells. Suppresses cell motility on or towards fibronectin possibly by driving alpha-v/beta-1 integrin (ITAGV-ITGB1) cell surface expression via ERK1/2 inactivation. Cleaves E-cadherin in response to growth factor deprivation. Plays a role in glomerular cell migration. Plays a role in pathological neovascularization. May play a role in cartilage remodeling. May be proteolytically processed, during sperm epididymal maturation and the acrosome reaction. May play a role in sperm-egg binding through its disintegrin domain. In Rattus norvegicus (Rat), this protein is Disintegrin and metalloproteinase domain-containing protein 15 (Adam15).